Reading from the N-terminus, the 212-residue chain is Lipid A acyltransferase PagP (212 aa).

The signal sequence occupies residues 1-24; sequence MYLKRTLITLSLITLPIVPFLSYA. Residues 36–47 show a composition bias toward polar residues; it reads NLAPVTVDSSDP. The disordered stretch occupies residues 36–56; the sequence is NLAPVTVDSSDPVSDKQGESW. Catalysis depends on residues histidine 84, aspartate 127, and serine 128.

Belongs to the lipid A palmitoyltransferase family. Homodimer.

The protein resides in the cell outer membrane. It carries out the reaction a lipid A + a 1,2-diacyl-sn-glycero-3-phosphocholine = a hepta-acyl lipid A + a 2-acyl-sn-glycero-3-phosphocholine. The enzyme catalyses a lipid IVA + a 1,2-diacyl-sn-glycero-3-phosphocholine = a lipid IVB + a 2-acyl-sn-glycero-3-phosphocholine. It catalyses the reaction a lipid IIA + a 1,2-diacyl-sn-glycero-3-phosphocholine = a lipid IIB + a 2-acyl-sn-glycero-3-phosphocholine. Functionally, transfers a fatty acid residue from the sn-1 position of a phospholipid to the N-linked hydroxyfatty acid chain on the proximal unit of lipid A or its precursors. The protein is Lipid A acyltransferase PagP of Pectobacterium carotovorum subsp. carotovorum (strain PC1).